Reading from the N-terminus, the 773-residue chain is DNA polymerase (773 aa).

The tract at residues 1-131 is N-terminal domain; it reads MILDADYITE…IDRGLIPMEG (131 aa). The tract at residues 133–385 is exonuclease domain; it reads EELRMLAFDI…ELARRTESYA (253 aa). Mg(2+) contacts are provided by Asp141, Glu143, and Asp315. A polymerase domain region spans residues 390 to 773; the sequence is KEPEKGLWEN…GLGAWLKPKT (384 aa). 2 cysteine pairs are disulfide-bonded: Cys428–Cys442 and Cys506–Cys509.

The protein belongs to the DNA polymerase type-B family. Requires Mg(2+) as cofactor.

The catalysed reaction is DNA(n) + a 2'-deoxyribonucleoside 5'-triphosphate = DNA(n+1) + diphosphate. With respect to regulation, DNA polymerase activity strongly inhibited by uracil-containing oligonucleotides. Its function is as follows. Thermostable DNA polymerase. In addition to polymerase activity, this DNA polymerase exhibits 3' to 5' exonuclease activity. This chain is DNA polymerase (pol), found in Desulfurococcus sp. (strain Tok).